We begin with the raw amino-acid sequence, 118 residues long: Ribonuclease P protein component (118 aa).

It belongs to the RnpA family. Consists of a catalytic RNA component (M1 or rnpB) and a protein subunit.

It carries out the reaction Endonucleolytic cleavage of RNA, removing 5'-extranucleotides from tRNA precursor.. Functionally, RNaseP catalyzes the removal of the 5'-leader sequence from pre-tRNA to produce the mature 5'-terminus. It can also cleave other RNA substrates such as 4.5S RNA. The protein component plays an auxiliary but essential role in vivo by binding to the 5'-leader sequence and broadening the substrate specificity of the ribozyme. The protein is Ribonuclease P protein component of Rickettsia conorii (strain ATCC VR-613 / Malish 7).